The primary structure comprises 205 residues: Thymidylate kinase (205 aa).

ATP is bound at residue glycine 10–serine 17.

This sequence belongs to the thymidylate kinase family.

It catalyses the reaction dTMP + ATP = dTDP + ADP. Phosphorylation of dTMP to form dTDP in both de novo and salvage pathways of dTTP synthesis. The chain is Thymidylate kinase from Ralstonia pickettii (strain 12J).